The sequence spans 107 residues: Integration host factor subunit alpha (107 aa).

Belongs to the bacterial histone-like protein family. Heterodimer of an alpha and a beta chain.

This protein is one of the two subunits of integration host factor, a specific DNA-binding protein that functions in genetic recombination as well as in transcriptional and translational control. The sequence is that of Integration host factor subunit alpha from Mesorhizobium japonicum (strain LMG 29417 / CECT 9101 / MAFF 303099) (Mesorhizobium loti (strain MAFF 303099)).